A 298-amino-acid polypeptide reads, in one-letter code: Glutamyl-Q tRNA(Asp) synthetase (298 aa).

Residues 9-13 (RFAPS) and glutamate 45 each bind L-glutamate. A 'HIGH' region motif is present at residues 12-22 (PSPSGELHFGS). Cysteine 101, cysteine 103, tyrosine 115, and cysteine 119 together coordinate Zn(2+). Positions 172 and 190 each coordinate L-glutamate. A 'KMSKS' region motif is present at residues 228–232 (KLSKQ). Residue lysine 231 coordinates ATP.

This sequence belongs to the class-I aminoacyl-tRNA synthetase family. GluQ subfamily. Requires Zn(2+) as cofactor.

Its function is as follows. Catalyzes the tRNA-independent activation of glutamate in presence of ATP and the subsequent transfer of glutamate onto a tRNA(Asp). Glutamate is transferred on the 2-amino-5-(4,5-dihydroxy-2-cyclopenten-1-yl) moiety of the queuosine in the wobble position of the QUC anticodon. This is Glutamyl-Q tRNA(Asp) synthetase from Cronobacter sakazakii (strain ATCC BAA-894) (Enterobacter sakazakii).